The following is a 556-amino-acid chain: Endoglucanase 22 (556 aa).

Residues 1 to 33 (MSRGRARLQPPPPGTRTTTLAAVLVLVLLAVVA) form the signal peptide. Residue aspartate 108 is the Nucleophile of the active site. Residues histidine 450, aspartate 502, and glutamate 511 contribute to the active site.

It belongs to the glycosyl hydrolase 9 (cellulase E) family.

The protein localises to the secreted. The enzyme catalyses Endohydrolysis of (1-&gt;4)-beta-D-glucosidic linkages in cellulose, lichenin and cereal beta-D-glucans.. This Oryza sativa subsp. japonica (Rice) protein is Endoglucanase 22 (GLU11).